The following is a 375-amino-acid chain: Succinyl-diaminopimelate desuccinylase (375 aa).

Residue H66 participates in Zn(2+) binding. D68 is a catalytic residue. Residue D99 coordinates Zn(2+). Residue E133 is the Proton acceptor of the active site. Zn(2+) is bound by residues E134, E162, and H348.

The protein belongs to the peptidase M20A family. DapE subfamily. In terms of assembly, homodimer. The cofactor is Zn(2+). Co(2+) serves as cofactor.

It carries out the reaction N-succinyl-(2S,6S)-2,6-diaminopimelate + H2O = (2S,6S)-2,6-diaminopimelate + succinate. The protein operates within amino-acid biosynthesis; L-lysine biosynthesis via DAP pathway; LL-2,6-diaminopimelate from (S)-tetrahydrodipicolinate (succinylase route): step 3/3. Functionally, catalyzes the hydrolysis of N-succinyl-L,L-diaminopimelic acid (SDAP), forming succinate and LL-2,6-diaminopimelate (DAP), an intermediate involved in the bacterial biosynthesis of lysine and meso-diaminopimelic acid, an essential component of bacterial cell walls. The protein is Succinyl-diaminopimelate desuccinylase of Photorhabdus laumondii subsp. laumondii (strain DSM 15139 / CIP 105565 / TT01) (Photorhabdus luminescens subsp. laumondii).